A 638-amino-acid polypeptide reads, in one-letter code: Threonine--tRNA ligase (638 aa).

Residues 1–61 (MPNIKLPDGS…ERDSELAILT (61 aa)) enclose the TGS domain. The catalytic stretch occupies residues 242–533 (DHRKLGRQLD…LIEHYAGAMP (292 aa)). Zn(2+) is bound by residues C333, H384, and H510.

It belongs to the class-II aminoacyl-tRNA synthetase family. As to quaternary structure, homodimer. Requires Zn(2+) as cofactor.

The protein resides in the cytoplasm. The catalysed reaction is tRNA(Thr) + L-threonine + ATP = L-threonyl-tRNA(Thr) + AMP + diphosphate + H(+). In terms of biological role, catalyzes the attachment of threonine to tRNA(Thr) in a two-step reaction: L-threonine is first activated by ATP to form Thr-AMP and then transferred to the acceptor end of tRNA(Thr). Also edits incorrectly charged L-seryl-tRNA(Thr). The protein is Threonine--tRNA ligase of Azoarcus sp. (strain BH72).